Consider the following 473-residue polypeptide: Photosystem II CP43 reaction center protein (473 aa).

Positions 1 to 14 (MKTLYSLRRFSHVE) are excised as a propeptide. T15 is modified (N-acetylthreonine). T15 is subject to Phosphothreonine. A run of 5 helical transmembrane segments spans residues 69–93 (LFEV…PHLA), 134–155 (LLGP…KDRN), 178–200 (KALY…RKIT), 255–275 (KPFA…LSYS), and 291–312 (WFNN…ASQA). E367 contributes to the [CaMn4O5] cluster binding site. A helical transmembrane segment spans residues 447–471 (RARAAAAGFEKGIDRDFEPVLSMTP).

It belongs to the PsbB/PsbC family. PsbC subfamily. PSII is composed of 1 copy each of membrane proteins PsbA, PsbB, PsbC, PsbD, PsbE, PsbF, PsbH, PsbI, PsbJ, PsbK, PsbL, PsbM, PsbT, PsbX, PsbY, PsbZ, Psb30/Ycf12, at least 3 peripheral proteins of the oxygen-evolving complex and a large number of cofactors. It forms dimeric complexes. It depends on Binds multiple chlorophylls and provides some of the ligands for the Ca-4Mn-5O cluster of the oxygen-evolving complex. It may also provide a ligand for a Cl- that is required for oxygen evolution. PSII binds additional chlorophylls, carotenoids and specific lipids. as a cofactor.

The protein localises to the plastid membrane. Its function is as follows. One of the components of the core complex of photosystem II (PSII). It binds chlorophyll and helps catalyze the primary light-induced photochemical processes of PSII. PSII is a light-driven water:plastoquinone oxidoreductase, using light energy to abstract electrons from H(2)O, generating O(2) and a proton gradient subsequently used for ATP formation. The chain is Photosystem II CP43 reaction center protein from Cuscuta gronovii (Common dodder).